The primary structure comprises 380 residues: MIISASTDYRAAAQAKLPPFLFHYIDGGAYAEHTLRRNTEDLAGIALRQRILRNMSDLSLETSLFGEKLAMPVILGPVGLTGMYARRGEVQAAKAAAQKGIPFTLSTVSVCPIEEVAPAIDRPMWFQLYVLKDRGFMRNALERAKAAGVKTLVFTVDMPVPGARYRDAHSGMSGPNAAVRRMLQAVTHPQWAWDVGLCGKPHDLGNVSAYRGKPTSLEDYIGWLGTNFDPSISWKDLDWIREFWQGPMIIKGILDPEDAKDAVRFGADGIVVSNHGGRQLDGVLSTAHALPAIAEAVKGDITLLADSGIRSGLDVVRMIALGADGVLLGRAFAYALAAAGQAGVANLLELIDKEMRVAMTLIGAKTIADISADSLVQGLR.

The FMN hydroxy acid dehydrogenase domain maps to 1-380 (MIISASTDYR…SADSLVQGLR (380 aa)). Position 24 (Tyr24) interacts with substrate. Residues Ser106 and Gln127 each coordinate FMN. Tyr129 is a binding site for substrate. Residue Thr155 coordinates FMN. Arg164 provides a ligand contact to substrate. Lys251 provides a ligand contact to FMN. The active-site Proton acceptor is His275. Arg278 lines the substrate pocket. FMN is bound at residue 306–330 (DSGIRSGLDVVRMIALGADGVLLGR).

Belongs to the FMN-dependent alpha-hydroxy acid dehydrogenase family. The cofactor is FMN.

It is found in the cell inner membrane. It carries out the reaction (S)-lactate + A = pyruvate + AH2. Functionally, catalyzes the conversion of L-lactate to pyruvate. Is coupled to the respiratory chain. The protein is L-lactate dehydrogenase of Serratia proteamaculans (strain 568).